The sequence spans 27 residues: GFGSFLGKALKAALKIGANALGGAPQQ.

As to expression, expressed by the skin glands.

The protein resides in the secreted. Functionally, antimicrobial peptide. The protein is Caerulein precursor fragment R5 of Xenopus ruwenzoriensis (Uganda clawed frog).